Consider the following 60-residue polypeptide: MSKGTPSRGKRQTQTHLTCRRCGRMSYHKRHKICSSCGFGRSTRMRSYGWITKRPKVATH.

Zn(2+) contacts are provided by Cys19, Cys22, Cys34, and Cys37. Residues 19 to 37 (CRRCGRMSYHKRHKICSSC) form a C4-type zinc finger.

Belongs to the eukaryotic ribosomal protein eL37 family. Requires Zn(2+) as cofactor.

Its function is as follows. Binds to the 23S rRNA. The protein is Large ribosomal subunit protein eL37 of Methanospirillum hungatei JF-1 (strain ATCC 27890 / DSM 864 / NBRC 100397 / JF-1).